The primary structure comprises 591 residues: V-type ATP synthase alpha chain (591 aa).

An ATP-binding site is contributed by 233-240 (GPFGAGKT).

It belongs to the ATPase alpha/beta chains family.

It carries out the reaction ATP + H2O + 4 H(+)(in) = ADP + phosphate + 5 H(+)(out). Functionally, produces ATP from ADP in the presence of a proton gradient across the membrane. The V-type alpha chain is a catalytic subunit. The chain is V-type ATP synthase alpha chain from Streptococcus pyogenes serotype M18 (strain MGAS8232).